Reading from the N-terminus, the 172-residue chain is Large ribosomal subunit protein uL10 (172 aa).

This sequence belongs to the universal ribosomal protein uL10 family. In terms of assembly, part of the ribosomal stalk of the 50S ribosomal subunit. The N-terminus interacts with L11 and the large rRNA to form the base of the stalk. The C-terminus forms an elongated spine to which L12 dimers bind in a sequential fashion forming a multimeric L10(L12)X complex.

Forms part of the ribosomal stalk, playing a central role in the interaction of the ribosome with GTP-bound translation factors. The protein is Large ribosomal subunit protein uL10 of Dinoroseobacter shibae (strain DSM 16493 / NCIMB 14021 / DFL 12).